Reading from the N-terminus, the 248-residue chain is Polyhedrin (248 aa).

Positions 1–27 are cleaved as a signal peptide; it reads MADVAGTSNRDFRGREQRLFNSEQYNY. N-linked (GlcNAc...) asparagine; by host glycosylation is found at asparagine 28, asparagine 77, asparagine 86, and asparagine 237.

It localises to the host cytoplasm. In terms of biological role, major component of the virus occlusion bodies, which are large proteinaceous structures (polyhedra), that protect the virus from the outside environment for extended periods until they are ingested by insect larvae. The protein is Polyhedrin of Bombyx mori cytoplasmic polyhedrosis virus (BmCPV).